The chain runs to 277 residues: Protein OPG166 (277 aa).

Asn29 and Asn58 each carry an N-linked (GlcNAc...) asparagine; by host glycan. Transmembrane regions (helical) follow at residues Thr124–Tyr144, Gly156–Phe176, Ile186–Ser206, Leu219–Leu239, and Leu247–Val267.

The protein belongs to the orthopoxvirus OPG166 protein family.

Its subcellular location is the host membrane. Functionally, promotes, when overexpressed, the influx of extracellular Ca(2+), leading to membrane permeability and host cell necrosis. The sequence is that of Protein OPG166 (OPG166) from Vaccinia virus (strain Copenhagen) (VACV).